Consider the following 367-residue polypeptide: Aurora kinase (367 aa).

Residues 30 to 49 are disordered; the sequence is TTATNGAPPQARVQPGKGYR. Positions 109–360 constitute a Protein kinase domain; the sequence is FEIGKVLGKG…LKEVKKHPWI (252 aa). Residues 115–123 and Lys-138 contribute to the ATP site; that span reads LGKGKFGRV. Asp-232 functions as the Proton acceptor in the catalytic mechanism.

It belongs to the protein kinase superfamily. Ser/Thr protein kinase family. Aurora subfamily.

It is found in the nucleus. The protein localises to the cytoplasm. It localises to the cytoskeleton. Its subcellular location is the spindle. The protein resides in the chromosome. It is found in the centromere. The protein localises to the kinetochore. The catalysed reaction is L-seryl-[protein] + ATP = O-phospho-L-seryl-[protein] + ADP + H(+). It carries out the reaction L-threonyl-[protein] + ATP = O-phospho-L-threonyl-[protein] + ADP + H(+). Component of the chromosomal passenger complex (CPC), a complex that acts as a key regulator of chromosome segregation and cytokinesis. Has a role in error-correction of aberrent kinetochore-microtubule attachments to ensure that sister kinetochores become bioriented and connect to opposite poles by promoting spindle assembly checkpoint signaling. This Eremothecium gossypii (strain ATCC 10895 / CBS 109.51 / FGSC 9923 / NRRL Y-1056) (Yeast) protein is Aurora kinase (IPL1).